We begin with the raw amino-acid sequence, 440 residues long: Serine hydroxymethyltransferase (440 aa).

(6S)-5,6,7,8-tetrahydrofolate is bound by residues Leu119 and 123–125 (GHL). Lys228 carries the N6-(pyridoxal phosphate)lysine modification. (6S)-5,6,7,8-tetrahydrofolate is bound at residue 370-372 (SPF).

The protein belongs to the SHMT family. As to quaternary structure, homodimer. The cofactor is pyridoxal 5'-phosphate.

Its subcellular location is the cytoplasm. The catalysed reaction is (6R)-5,10-methylene-5,6,7,8-tetrahydrofolate + glycine + H2O = (6S)-5,6,7,8-tetrahydrofolate + L-serine. It functions in the pathway one-carbon metabolism; tetrahydrofolate interconversion. Its pathway is amino-acid biosynthesis; glycine biosynthesis; glycine from L-serine: step 1/1. Its function is as follows. Catalyzes the reversible interconversion of serine and glycine with tetrahydrofolate (THF) serving as the one-carbon carrier. This reaction serves as the major source of one-carbon groups required for the biosynthesis of purines, thymidylate, methionine, and other important biomolecules. Also exhibits THF-independent aldolase activity toward beta-hydroxyamino acids, producing glycine and aldehydes, via a retro-aldol mechanism. In Chloroherpeton thalassium (strain ATCC 35110 / GB-78), this protein is Serine hydroxymethyltransferase.